The following is a 201-amino-acid chain: Large ribosomal subunit protein uL4 (201 aa).

A disordered region spans residues 46–71; the sequence is QKTRAEITGTGKKPWRQKGTGRARAG.

The protein belongs to the universal ribosomal protein uL4 family. In terms of assembly, part of the 50S ribosomal subunit.

One of the primary rRNA binding proteins, this protein initially binds near the 5'-end of the 23S rRNA. It is important during the early stages of 50S assembly. It makes multiple contacts with different domains of the 23S rRNA in the assembled 50S subunit and ribosome. Its function is as follows. Forms part of the polypeptide exit tunnel. In Shewanella amazonensis (strain ATCC BAA-1098 / SB2B), this protein is Large ribosomal subunit protein uL4.